The sequence spans 339 residues: Fructose-1,6-bisphosphatase, cytosolic (339 aa).

Positions 71, 100, 121, 123, and 124 each coordinate Mg(2+). Residues 124–127 (DGSS), Asn215, Tyr247, Tyr267, and Lys277 each bind substrate. Glu283 contributes to the Mg(2+) binding site.

Belongs to the FBPase class 1 family. Mg(2+) is required as a cofactor.

The protein resides in the cytoplasm. It carries out the reaction beta-D-fructose 1,6-bisphosphate + H2O = beta-D-fructose 6-phosphate + phosphate. The chain is Fructose-1,6-bisphosphatase, cytosolic from Oryza sativa subsp. indica (Rice).